Here is a 353-residue protein sequence, read N- to C-terminus: Photosystem II D2 protein (353 aa).

Position 2 is an N-acetylthreonine (Thr2). Thr2 carries the phosphothreonine modification. The chain crosses the membrane as a helical span at residues Cys41–Thr61. His118 is a binding site for chlorophyll a. A helical transmembrane segment spans residues Gly125 to Pro141. The pheophytin a site is built by Gln130 and Asn143. Residues Val153 to Ser166 form a helical membrane-spanning segment. A chlorophyll a-binding site is contributed by His198. Residues Ala208 to Asp228 traverse the membrane as a helical segment. A plastoquinone-binding residues include His215 and Phe262. His215 contributes to the Fe cation binding site. Residue His269 coordinates Fe cation. The helical transmembrane segment at Gly279–Arg295 threads the bilayer.

This sequence belongs to the reaction center PufL/M/PsbA/D family. In terms of assembly, PSII is composed of 1 copy each of membrane proteins PsbA, PsbB, PsbC, PsbD, PsbE, PsbF, PsbH, PsbI, PsbJ, PsbK, PsbL, PsbM, PsbT, PsbX, PsbY, PsbZ, Psb30/Ycf12, at least 3 peripheral proteins of the oxygen-evolving complex and a large number of cofactors. It forms dimeric complexes. The D1/D2 heterodimer binds P680, chlorophylls that are the primary electron donor of PSII, and subsequent electron acceptors. It shares a non-heme iron and each subunit binds pheophytin, quinone, additional chlorophylls, carotenoids and lipids. There is also a Cl(-1) ion associated with D1 and D2, which is required for oxygen evolution. The PSII complex binds additional chlorophylls, carotenoids and specific lipids. is required as a cofactor.

It is found in the plastid. The protein resides in the chloroplast thylakoid membrane. It catalyses the reaction 2 a plastoquinone + 4 hnu + 2 H2O = 2 a plastoquinol + O2. In terms of biological role, photosystem II (PSII) is a light-driven water:plastoquinone oxidoreductase that uses light energy to abstract electrons from H(2)O, generating O(2) and a proton gradient subsequently used for ATP formation. It consists of a core antenna complex that captures photons, and an electron transfer chain that converts photonic excitation into a charge separation. The D1/D2 (PsbA/PsbD) reaction center heterodimer binds P680, the primary electron donor of PSII as well as several subsequent electron acceptors. D2 is needed for assembly of a stable PSII complex. This Carica papaya (Papaya) protein is Photosystem II D2 protein.